Consider the following 320-residue polypeptide: L-lactate dehydrogenase 2 (320 aa).

NAD(+)-binding positions include 18–19 (AV), D40, and R45. Substrate is bound by residues Q88, R94, and 126–129 (NPVD). Residues 124–126 (ITN) and S149 each bind NAD(+). 154-157 (DSAR) contributes to the substrate binding site. Residues R159 and 171–176 (KNVHAY) contribute to the beta-D-fructose 1,6-bisphosphate site. Catalysis depends on H181, which acts as the Proton acceptor. A Phosphotyrosine modification is found at Y228. T237 lines the substrate pocket.

Belongs to the LDH/MDH superfamily. LDH family. As to quaternary structure, homotetramer.

It localises to the cytoplasm. It catalyses the reaction (S)-lactate + NAD(+) = pyruvate + NADH + H(+). It participates in fermentation; pyruvate fermentation to lactate; (S)-lactate from pyruvate: step 1/1. Its activity is regulated as follows. Allosterically activated by fructose 1,6-bisphosphate (FBP). Functionally, catalyzes the conversion of lactate to pyruvate. The chain is L-lactate dehydrogenase 2 from Bifidobacterium longum subsp. longum (strain ATCC 15707 / DSM 20219 / JCM 1217 / NCTC 11818 / E194b).